Here is a 718-residue protein sequence, read N- to C-terminus: Potassium channel KAT1 (718 aa).

Over Met-1–Glu-60 the chain is Cytoplasmic. Residues Leu-61–Leu-81 form a helical membrane-spanning segment. Over Arg-82 to Leu-88 the chain is Extracellular. The helical transmembrane segment at Leu-89–Val-109 threads the bilayer. The Cytoplasmic segment spans residues Ala-110–Ser-132. Residues Thr-133–Thr-153 traverse the membrane as a helical segment. Residues His-154–Lys-162 are Extracellular-facing. Residues Val-163 to Glu-183 traverse the membrane as a helical; Voltage-sensor segment. Topologically, residues Lys-184 to Lys-197 are cytoplasmic. Residues Leu-198 to Asp-218 form a helical membrane-spanning segment. Residues Arg-219–Ile-245 lie on the Extracellular side of the membrane. The segment at residues Thr-246–Ala-265 is an intramembrane region (pore-forming). Residues Glu-266–Thr-269 lie on the Extracellular side of the membrane. Residues Glu-270–Gly-290 form a helical membrane-spanning segment. The Cytoplasmic portion of the chain corresponds to Asn-291 to Met-718. A nucleoside 3',5'-cyclic phosphate is bound at residue Leu-374 to Lys-493. The disordered stretch occupies residues Glu-560 to Val-584. The segment covering Thr-562 to Met-574 has biased composition (polar residues). The span at Thr-575–Val-584 shows a compositional bias: basic and acidic residues. The KHA domain maps to Arg-647–Met-718.

Belongs to the potassium channel family. Plant (TC 1.A.1.4) subfamily.

It is found in the membrane. In terms of biological role, probable inward-rectifying potassium channel. Assuming opened or closed conformations in response to the voltage difference across the membrane, the channel is activated by hyperpolarization. In Oryza sativa subsp. japonica (Rice), this protein is Potassium channel KAT1.